Consider the following 51-residue polypeptide: ATP synthase F(1) complex subunit epsilon, mitochondrial (51 aa).

N6-acetyllysine; alternate is present on residues Lys21, Lys32, and Lys37. 3 positions are modified to N6-succinyllysine; alternate: Lys21, Lys32, and Lys37. Lys44 bears the N6-acetyllysine mark.

Belongs to the eukaryotic ATPase epsilon family. Component of the ATP synthase complex composed at least of ATP5F1A/subunit alpha, ATP5F1B/subunit beta, ATP5MC1/subunit c (homooctomer), MT-ATP6/subunit a, MT-ATP8/subunit 8, ATP5ME/subunit e, ATP5MF/subunit f, ATP5MG/subunit g, ATP5MK/subunit k, ATP5MJ/subunit j, ATP5F1C/subunit gamma, ATP5F1D/subunit delta, ATP5F1E/subunit epsilon, ATP5PF/subunit F6, ATP5PB/subunit b, ATP5PD/subunit d, ATP5PO/subunit OSCP. ATP synthase complex consists of a soluble F(1) head domain (subunits alpha(3) and beta(3)) - the catalytic core - and a membrane F(0) domain - the membrane proton channel (subunits c, a, 8, e, f, g, k and j). These two domains are linked by a central stalk (subunits gamma, delta, and epsilon) rotating inside the F1 region and a stationary peripheral stalk (subunits F6, b, d, and OSCP). Ubiquitous.

The protein resides in the mitochondrion. It is found in the mitochondrion inner membrane. Subunit epsilon, of the mitochondrial membrane ATP synthase complex (F(1)F(0) ATP synthase or Complex V) that produces ATP from ADP in the presence of a proton gradient across the membrane which is generated by electron transport complexes of the respiratory chain. ATP synthase complex consist of a soluble F(1) head domain - the catalytic core - and a membrane F(1) domain - the membrane proton channel. These two domains are linked by a central stalk rotating inside the F(1) region and a stationary peripheral stalk. During catalysis, ATP synthesis in the catalytic domain of F(1) is coupled via a rotary mechanism of the central stalk subunits to proton translocation. In vivo, can only synthesize ATP although its ATP hydrolase activity can be activated artificially in vitro. May be essential for the assembly of F(1) and may play an important role in the incorporation of the hydrophobic subunit c into the F(1)-c oligomer rotor of the mitochondrial ATP synthase complex. The chain is ATP synthase F(1) complex subunit epsilon, mitochondrial from Homo sapiens (Human).